The sequence spans 357 residues: UDP-N-acetylglucosamine--N-acetylmuramyl-(pentapeptide) pyrophosphoryl-undecaprenol N-acetylglucosamine transferase (357 aa).

UDP-N-acetyl-alpha-D-glucosamine is bound by residues 14-16 (TGG), Asn-128, Arg-169, Ser-193, Ile-248, and Gln-292.

Belongs to the glycosyltransferase 28 family. MurG subfamily.

It localises to the cell inner membrane. It catalyses the reaction di-trans,octa-cis-undecaprenyl diphospho-N-acetyl-alpha-D-muramoyl-L-alanyl-D-glutamyl-meso-2,6-diaminopimeloyl-D-alanyl-D-alanine + UDP-N-acetyl-alpha-D-glucosamine = di-trans,octa-cis-undecaprenyl diphospho-[N-acetyl-alpha-D-glucosaminyl-(1-&gt;4)]-N-acetyl-alpha-D-muramoyl-L-alanyl-D-glutamyl-meso-2,6-diaminopimeloyl-D-alanyl-D-alanine + UDP + H(+). It functions in the pathway cell wall biogenesis; peptidoglycan biosynthesis. In terms of biological role, cell wall formation. Catalyzes the transfer of a GlcNAc subunit on undecaprenyl-pyrophosphoryl-MurNAc-pentapeptide (lipid intermediate I) to form undecaprenyl-pyrophosphoryl-MurNAc-(pentapeptide)GlcNAc (lipid intermediate II). In Bdellovibrio bacteriovorus (strain ATCC 15356 / DSM 50701 / NCIMB 9529 / HD100), this protein is UDP-N-acetylglucosamine--N-acetylmuramyl-(pentapeptide) pyrophosphoryl-undecaprenol N-acetylglucosamine transferase.